A 173-amino-acid polypeptide reads, in one-letter code: Invasion protein B homolog BruAb1_0366 (173 aa).

The signal sequence occupies residues Met-1–Ala-23.

Belongs to the IalB family.

This Brucella abortus biovar 1 (strain 9-941) protein is Invasion protein B homolog BruAb1_0366.